Consider the following 129-residue polypeptide: Lysozyme C-2 (129 aa).

In terms of domain architecture, C-type lysozyme spans 1–129 (KVFERCELAR…VSSYVEGCTL (129 aa)). 4 disulfide bridges follow: Cys6–Cys127, Cys30–Cys115, Cys65–Cys81, and Cys77–Cys95. Catalysis depends on residues Glu35 and Asp53.

It belongs to the glycosyl hydrolase 22 family. Monomer.

The catalysed reaction is Hydrolysis of (1-&gt;4)-beta-linkages between N-acetylmuramic acid and N-acetyl-D-glucosamine residues in a peptidoglycan and between N-acetyl-D-glucosamine residues in chitodextrins.. Lysozymes have primarily a bacteriolytic function; those in tissues and body fluids are associated with the monocyte-macrophage system and enhance the activity of immunoagents. The chain is Lysozyme C-2 from Capra hircus (Goat).